Here is a 775-residue protein sequence, read N- to C-terminus: E3 ubiquitin-protein ligase ICP0 (775 aa).

A disordered region spans residues 1 to 112 (MEPRPGASTR…PPREDGGSDE (112 aa)). 2 stretches are compositionally biased toward basic and acidic residues: residues 10-21 (RRPEGRPQREPA) and 45-57 (VGGRGDADHHDDD). Over residues 58 to 69 (SASEADSTDTEL) the composition is skewed to acidic residues. Threonine 67 is subject to Phosphothreonine; by host; by CK1. Residues 116-157 (CAVCTDEIAPHLRCDTFPCMHRFCIPCMKTWMQLRNTCPLCN) form an RING-type zinc finger. The disordered stretch occupies residues 221-636 (RALSPTHPEP…HAETSGAVPA (416 aa)). The span at 231-243 (TTDEDDDDLDDAD) shows a compositional bias: acidic residues. A compositionally biased stretch (low complexity) spans 258 to 284 (RRGAAAPPVTGGASHAAPQPAAARTAP). Residues 293-302 (GSSNTNTTTN) are compositionally biased toward polar residues. The segment covering 310–321 (RQSRAAAPRGAS) has biased composition (low complexity). Gly residues predominate over residues 322–331 (GPSGGVGVGV). The span at 369–390 (PASPHRPPAAPMPGSAPRPGPP) shows a compositional bias: pro residues. The segment covering 391 to 409 (ASAAASGPARPRAAVAPCV) has biased composition (low complexity). A compositionally biased stretch (pro residues) spans 410–421 (RAPPPGPGPRAP). Over residues 422–431 (APGAEPAARP) the composition is skewed to low complexity. Residues 439–453 (QSHSSLAQAANQEQS) are compositionally biased toward polar residues. The span at 464-476 (GSGGPGVEGGHGP) shows a compositional bias: gly residues. A compositionally biased stretch (low complexity) spans 477 to 493 (SRGAAPSGAAPLPSAAS). A compositionally biased stretch (polar residues) spans 509 to 519 (GQENPSPQSTR). Residues 539–549 (GPGGRGQGGPG) show a composition bias toward gly residues. The segment covering 550 to 592 (TPLTSSAASASSSSASSSSAPTPAGAASSAAGAASSSASASSG) has biased composition (low complexity). The segment covering 617–626 (GPRKCARKTR) has biased composition (basic residues).

It belongs to the simplexviruses ICp0 family. As to quaternary structure, interacts directly with human RCOR1/CoREST protein, leading to the disruption of the human BHC corepressor complex. Interacts with human CENPA, leading to its degradation. Interacts with human USP7; this interaction modulates ICP0 stability. Interacts with human CDC34. Interacts (when phosphorylated) with human RNF8 (via FHA domain). Interacts with human TRIM27. Interacts with human ZBP1. Interacts with host MORC3; this interaction promotes the degradation of host MORC3. Phosphorylated at Thr-67, leading to promote interaction with host RNF8. Phosphorylated by host CHEK2; leading to increased SUMO-targeted ubiquitin ligase activity of ICP0. In terms of processing, auto-ubiquitinated. Deubiquitinated by host USP7; leading to stabilize it.

It is found in the host cytoplasm. The protein resides in the host nucleus. It catalyses the reaction S-ubiquitinyl-[E2 ubiquitin-conjugating enzyme]-L-cysteine + [acceptor protein]-L-lysine = [E2 ubiquitin-conjugating enzyme]-L-cysteine + N(6)-ubiquitinyl-[acceptor protein]-L-lysine.. Its function is as follows. SUMO-targeted ubiquitin ligase that plays an essential role in nuclear antiviral defense evasion triggered by dsDNA viruses. Acts during the initial stages of lytic infection and the reactivation of latent viral genome. Prevents the antiviral effect of nuclear bodies by degrading host PML, SP100 and MORC3. Prevents antiviral response to viral DNA induced by IFI16 by degrading it. Additionally, inhibits host IRF3 nuclear signaling to prevent interferon production by the infected cells. Interestingly, the E3 ubiquitin ligase activity associated with the RING finger domain does not seem to be directly required to inhibit the activation of IRF3 but instead plays a critical role in modulating the cellular localization of ICP0. Upon reactivation of latent genome, suppresses the silencing of viral DNA by dissociating either HDAC1 or HDAC2 from the HDAC-RCOR1-REST-KDM1A complex localized at the ND10 structures and causes their dispersal. Two cellular histone ubiquitin ligases RNF8 and RNF168 are also targeted by ICP0 for degradation, leading to a loss of ubiquitinated forms of H2A, a relief of transcriptional repression, and the activation of latent viral genomes. Enhances the localization of host CCND3 to ND10 bodies that serve as precursors of replication compartments to enable efficient viral replication. Like many RING-finger E3 ubiquitin ligases, ICP0 can induce its own ubiquitination, an activity that promotes its instability due to its targeting to the 26S proteasome for degradation. ICP0 restricts this process by recruiting the cellular ubiquitin-specific protease USP7 that cleaves the anchored ubiquitin chains from ICP0, thereby promoting its stabilization. The polypeptide is E3 ubiquitin-protein ligase ICP0 (ICP0) (Homo sapiens (Human)).